The primary structure comprises 357 residues: MPVLPWLAAAATTPVRRSPPLPATPRALLRLPASSFPPWSNCAKSGLPPRGPFATAADTPLGGSLPEPEEERDTLLDGALRAARFRDEESRRPDPLFIDPYAAVLLSLDVASEDKDLLALHLMPSAEHYRLVTRYIDDKLQHFISNSDDLRQIVLLTDGMDTRPYRLSWPRLSVVYDVSPRRVFITASQQLRGAGAKISRNCVVLHTSSESPDLQAGLNKNGFNGNRPSLWVLQGLPLFTFKSLEDLLLVIGNLAMKGSIFIGEVPRFTQWGAATDMASEQDRLENLFFTQGFRVSFVHYEEVAKDVGLGLDSPPEIHGRAIFIAEQLRFSDAQMESFRMHFERIEDDADEDGFEEL.

The transit peptide at methionine 1–phenylalanine 53 directs the protein to the chloroplast. Positions arginine 50 to glutamate 71 are disordered.

It belongs to the methyltransferase superfamily. LCMT family. As to expression, expressed in roots, leaf sheaths, flag leaves and panicles.

Its subcellular location is the plastid. The protein resides in the chloroplast. It catalyses the reaction N-acetylserotonin + S-adenosyl-L-methionine = melatonin + S-adenosyl-L-homocysteine + H(+). It functions in the pathway aromatic compound metabolism; melatonin biosynthesis; melatonin from serotonin: step 1/2. Functionally, involved in melatonin biosynthesis. Can function as acetylserotonin O-methyltransferase. Catalyzes the transfer of a methyl group onto N-acetylserotonin, producing melatonin (N-acetyl-5-methoxytryptamine). Involved in the regulation of jasmonate- and brassinosteroid-mediated plant growth and defense responses. This Oryza sativa subsp. japonica (Rice) protein is O-methyltransferase 1, chloroplastic.